The primary structure comprises 29 residues: Kalata-B15 (29 aa).

Positions 1–29 form a cross-link, cyclopeptide (Gly-Asp); the sequence is GLPVCGESCFGGSCYTPGCSCTWPICTRD. 3 disulfide bridges follow: Cys-5–Cys-19, Cys-9–Cys-21, and Cys-14–Cys-26.

This is a cyclic peptide.

Functionally, probably participates in a plant defense mechanism. The chain is Kalata-B15 from Oldenlandia affinis.